Reading from the N-terminus, the 259-residue chain is Ras-related protein Rab-34 (259 aa).

Met-1 bears the N-acetylmethionine mark. GTP contacts are provided by Ser-62, Val-63, Gly-64, Lys-65, Thr-66, Asp-78, Tyr-81, and Thr-84. Residue Thr-66 participates in Mg(2+) binding. A Switch 1 motif is present at residues 71–89 (RFCKDTFDKNYKATIGVDF). Positions 84 and 107 each coordinate Mg(2+). The Switch 2 signature appears at 108 to 127 (TAGQERFKCIASTYYRGAQA). GTP is bound by residues Gly-110, Lys-167, Asp-169, and Ser-198. Residue Ser-241 is modified to Phosphoserine. Residues Cys-257 and Cys-258 are each lipidated (S-geranylgeranyl cysteine).

Belongs to the small GTPase superfamily. Rab family. Interacts with RILP. The GTP-bound form interacts with REP15. Mg(2+) is required as a cofactor.

It localises to the cytoplasm. Its subcellular location is the golgi apparatus. The protein resides in the cytoplasmic vesicle. It is found in the phagosome. The protein localises to the phagosome membrane. It localises to the cell projection. Its subcellular location is the cilium. The protein resides in the cytoskeleton. It is found in the microtubule organizing center. The protein localises to the centrosome. It localises to the centriole. The enzyme catalyses GTP + H2O = GDP + phosphate + H(+). With respect to regulation, regulated by guanine nucleotide exchange factors (GEFs) which promote the exchange of bound GDP for free GTP. Regulated by GTPase activating proteins (GAPs) which increase the GTP hydrolysis activity. Inhibited by GDP dissociation inhibitors (GDIs). The small GTPases Rab are key regulators of intracellular membrane trafficking, from the formation of transport vesicles to their fusion with membranes. Rabs cycle between an inactive GDP-bound form and an active GTP-bound form that is able to recruit to membranes different sets of downstream effectors directly responsible for vesicle formation, movement, tethering and fusion. RAB34 transports protein involved in the redistribution of lysosomes to the peri-Golgi region. Plays a role in the maturation of phagosomes that engulf pathogens, such as S.aureus and M.tuberculosis. Plays a role in the fusion of phagosomes with lysosomes. Required for the early steps of intracellular ciliogenesis, the cilium assembly pathway initiated by trafficking and docking of ciliary vesicles to the centrioles in the cytoplasm, followed by axoneme formation in the cytoplasm. After axoneme elongation, the centrioles migrate close to the cell surface so that ciliary vesicles can fuse with the plasma membrane to expose cilia to the extracellular space. It seems dispensable for ciliogenesis via the extracellular pathway where cilium assembly begins after migration and docking of the centriole to the plasma membrane. Also acts as a positive regulator of hedgehog signaling and regulates ciliary function. The sequence is that of Ras-related protein Rab-34 from Mus musculus (Mouse).